Consider the following 601-residue polypeptide: Glutamine--fructose-6-phosphate aminotransferase [isomerizing] (601 aa).

Cys2 functions as the Nucleophile; for GATase activity in the catalytic mechanism. Positions 2-218 constitute a Glutamine amidotransferase type-2 domain; the sequence is CGIVGYIGYD…DHEIVIVKKD (217 aa). SIS domains are found at residues 284–423 and 453–591; these read IIND…EHGR and IATD…VDKP. Lys596 (for Fru-6P isomerization activity) is an active-site residue.

Homodimer.

It is found in the cytoplasm. It carries out the reaction D-fructose 6-phosphate + L-glutamine = D-glucosamine 6-phosphate + L-glutamate. Its function is as follows. Catalyzes the first step in hexosamine metabolism, converting fructose-6P into glucosamine-6P using glutamine as a nitrogen source. The polypeptide is Glutamine--fructose-6-phosphate aminotransferase [isomerizing] (Staphylococcus aureus (strain COL)).